Here is a 588-residue protein sequence, read N- to C-terminus: Sentrin-specific protease 2 (588 aa).

Residues 28 to 31 (KRRR) carry the Nuclear localization signal motif. At Ser-32 the chain carries Phosphoserine. The short motif at 47 to 52 (PAKRPR) is the Nuclear localization signal element. A disordered region spans residues 157-184 (EGYNRRPSGRRHSKSNPESSLTWKPQEQ). Residues 172-184 (NPESSLTWKPQEQ) show a composition bias toward polar residues. Residues 316 to 331 (MEPDLSEEVSARLRLG) carry the Nuclear export signal motif. Ser-332 and Ser-343 each carry phosphoserine. The protease stretch occupies residues 394–558 (LRITRGDIQT…MFTCKYADYI (165 aa)). Active-site residues include His-477 and Asp-494. Residue Cys-547 is the Nucleophile of the active site.

It belongs to the peptidase C48 family. Binds to SUMO2 and SUMO3. Interacts with the C-terminal domain of NUP153 via its N-terminus. Interacts with MTA1. In terms of processing, polyubiquitinated; which leads to proteasomal degradation. As to expression, highly expressed in testis. Detected in brain, heart and thymus.

It is found in the nucleus. It localises to the nuclear pore complex. Its subcellular location is the nucleus membrane. The protein localises to the cytoplasm. The protein resides in the cytoplasmic vesicle. It is found in the PML body. In terms of biological role, protease that catalyzes two essential functions in the SUMO pathway. The first is the hydrolysis of an alpha-linked peptide bond at the C-terminal end of the small ubiquitin-like modifier (SUMO) propeptides, SUMO1, SUMO2 and SUMO3 leading to the mature form of the proteins. The second is the deconjugation of SUMO1, SUMO2 and SUMO3 from targeted proteins, by cleaving an epsilon-linked peptide bond between the C-terminal glycine of the mature SUMO and the lysine epsilon-amino group of the target protein. May down-regulate CTNNB1 levels and thereby modulate the Wnt pathway. Deconjugates SUMO2 from MTA1. Plays a dynamic role in adipogenesis by desumoylating and promoting the stabilization of CEBPB. Acts as a regulator of the cGAS-STING pathway by catalyzing desumoylation of CGAS and STING1 during the late phase of viral infection. Its function is as follows. Activates transcription. The sequence is that of Sentrin-specific protease 2 (Senp2) from Mus musculus (Mouse).